The following is a 429-amino-acid chain: Glycine betaine monooxygenase oxygenase subunit (429 aa).

Residues 56–163 (WLIAGMTCEI…VKTAGGYIFI (108 aa)) form the Rieske domain. Positions 98, 100, 118, and 121 each coordinate [2Fe-2S] cluster. Fe cation contacts are provided by histidine 217 and histidine 222.

This sequence belongs to the bacterial ring-hydroxylating dioxygenase alpha subunit family. In terms of assembly, the system is composed of an oxygenase subunit (GbcA) and a reductase subunit (GbcB). It depends on [2Fe-2S] cluster as a cofactor. Fe cation serves as cofactor.

It carries out the reaction glycine betaine + NADH + O2 + H(+) = N,N-dimethylglycine + formaldehyde + NAD(+) + H2O. Involved in degradation of glycine betaine. Part of a Rieske-type oxygenase system that catalyzes the conversion of glycine betaine (GB) to dimethylglycine (DMG). This subunit is the terminal oxygenase component of the system. Required for growth on choline and GB, but not for growth on DMG. In Pseudomonas aeruginosa (strain ATCC 15692 / DSM 22644 / CIP 104116 / JCM 14847 / LMG 12228 / 1C / PRS 101 / PAO1), this protein is Glycine betaine monooxygenase oxygenase subunit.